A 1503-amino-acid chain; its full sequence is Lysine-specific demethylase 5B-B (1503 aa).

The region spanning Cys-15–Pro-56 is the JmjN domain. The region spanning Thr-80–Ser-170 is the ARID domain. Polar residues predominate over residues Val-202–Ala-211. 2 disordered regions span residues Val-202–Ser-223 and Ile-268–Pro-287. The span at Ile-268–Ser-278 shows a compositional bias: basic and acidic residues. A PHD-type 1 zinc finger spans residues Leu-295–Gln-345. Residues Lys-439–Arg-605 form the JmjC domain. The Fe cation site is built by His-485, Asp-488, and His-573. The PHD-type 2 zinc-finger motif lies at Leu-1168–Ser-1216. Disordered stretches follow at residues Thr-1362–Asp-1381 and Glu-1403–Glu-1442. The PHD-type 3 zinc-finger motif lies at Met-1444–Ser-1497.

It belongs to the JARID1 histone demethylase family. The cofactor is Fe(2+).

The protein localises to the nucleus. The catalysed reaction is N(6),N(6),N(6)-trimethyl-L-lysyl(4)-[histone H3] + 3 2-oxoglutarate + 3 O2 = L-lysyl(4)-[histone H3] + 3 formaldehyde + 3 succinate + 3 CO2. In terms of biological role, histone demethylase that demethylates 'Lys-4' of histone H3, thereby playing a central role in histone code. Does not demethylate histone H3 'Lys-9' or H3 'Lys-27'. Demethylates trimethylated, dimethylated and monomethylated H3 'Lys-4'. Acts as a transcriptional corepressor. This chain is Lysine-specific demethylase 5B-B (kdm5bb), found in Danio rerio (Zebrafish).